The following is a 70-amino-acid chain: DNA gyrase inhibitor YacG (70 aa).

Zn(2+) is bound by residues C7, C10, C26, and C30.

The protein belongs to the DNA gyrase inhibitor YacG family. In terms of assembly, interacts with GyrB. The cofactor is Zn(2+).

In terms of biological role, inhibits all the catalytic activities of DNA gyrase by preventing its interaction with DNA. Acts by binding directly to the C-terminal domain of GyrB, which probably disrupts DNA binding by the gyrase. The chain is DNA gyrase inhibitor YacG from Shewanella sediminis (strain HAW-EB3).